The primary structure comprises 95 residues: MTKGTGSFGKRRNKSHTLCVRCGRRSFHIQKSRCSACAYPAARKRTYNWSVKAIRRKTTGTGRMRYLRNVPRRFKTGFREGTEAKPRNKGVASSA.

Zn(2+)-binding residues include Cys19, Cys22, Cys34, and Cys37. The segment at 19 to 37 (CVRCGRRSFHIQKSRCSAC) adopts a C4-type zinc-finger fold.

The protein belongs to the eukaryotic ribosomal protein eL37 family. The cofactor is Zn(2+).

Binds to the 23S rRNA. This Arabidopsis thaliana (Mouse-ear cress) protein is Large ribosomal subunit protein eL37y (RPL37B).